The chain runs to 418 residues: MSLKEMGKNAKQAATILAQLSQQQKNTALQIIAEQLELQSDKILVENAKDIQLAKENGLSDAIIDRLLLTKERINSIAKDVRHIISLSDPIGQIIDGGILESGTKLERVRVPLGVIGVIYEARPNVTVDVATLCLKTSNAVILRGGKETNYSNKILVKVIQDALEQTGLPKNAVQAITDPDRNFVLELLKLDKYVDMIIPRGGAGLHEFCKQNSTIPVIIGGVGVCHVFVEESAEQDKALAVIDNAKTQRPSTCNTLETLLVQESIATEFLPKLVAHLKHKNVKYHADPTALSILEKQNAEVSIVQEQQLRQEWGSLDLNVVIVKDIQQAIAHITEYGTQHSEAILTSSPRLAHQFVSLVDAAAVYVNASTRFTDGGQFGLGAEVAVSTQKLHARGPMGLEALTTYKWVCSGDYTVRQ.

This sequence belongs to the gamma-glutamyl phosphate reductase family.

The protein resides in the cytoplasm. The catalysed reaction is L-glutamate 5-semialdehyde + phosphate + NADP(+) = L-glutamyl 5-phosphate + NADPH + H(+). The protein operates within amino-acid biosynthesis; L-proline biosynthesis; L-glutamate 5-semialdehyde from L-glutamate: step 2/2. Catalyzes the NADPH-dependent reduction of L-glutamate 5-phosphate into L-glutamate 5-semialdehyde and phosphate. The product spontaneously undergoes cyclization to form 1-pyrroline-5-carboxylate. The chain is Gamma-glutamyl phosphate reductase from Histophilus somni (strain 2336) (Haemophilus somnus).